A 412-amino-acid polypeptide reads, in one-letter code: Multifunctional CCA protein (412 aa).

Positions 8 and 11 each coordinate ATP. 2 residues coordinate CTP: Gly-8 and Arg-11. Glu-21 and Asp-23 together coordinate Mg(2+). ATP contacts are provided by Arg-92, Arg-138, and Arg-141. Positions 92, 138, and 141 each coordinate CTP. Residues Thr-227 to Trp-328 enclose the HD domain.

Belongs to the tRNA nucleotidyltransferase/poly(A) polymerase family. Bacterial CCA-adding enzyme type 1 subfamily. Monomer. Can also form homodimers and oligomers. Mg(2+) is required as a cofactor. It depends on Ni(2+) as a cofactor.

It carries out the reaction a tRNA precursor + 2 CTP + ATP = a tRNA with a 3' CCA end + 3 diphosphate. The catalysed reaction is a tRNA with a 3' CCA end + 2 CTP + ATP = a tRNA with a 3' CCACCA end + 3 diphosphate. In terms of biological role, catalyzes the addition and repair of the essential 3'-terminal CCA sequence in tRNAs without using a nucleic acid template. Adds these three nucleotides in the order of C, C, and A to the tRNA nucleotide-73, using CTP and ATP as substrates and producing inorganic pyrophosphate. tRNA 3'-terminal CCA addition is required both for tRNA processing and repair. Also involved in tRNA surveillance by mediating tandem CCA addition to generate a CCACCA at the 3' terminus of unstable tRNAs. While stable tRNAs receive only 3'-terminal CCA, unstable tRNAs are marked with CCACCA and rapidly degraded. The chain is Multifunctional CCA protein from Baumannia cicadellinicola subsp. Homalodisca coagulata.